Here is a 129-residue protein sequence, read N- to C-terminus: Small ribosomal subunit protein uS11 (129 aa).

This sequence belongs to the universal ribosomal protein uS11 family. In terms of assembly, part of the 30S ribosomal subunit. Interacts with proteins S7 and S18. Binds to IF-3.

Located on the platform of the 30S subunit, it bridges several disparate RNA helices of the 16S rRNA. Forms part of the Shine-Dalgarno cleft in the 70S ribosome. This Nitrosomonas eutropha (strain DSM 101675 / C91 / Nm57) protein is Small ribosomal subunit protein uS11.